The sequence spans 217 residues: Pro-Pro endopeptidase (217 aa).

Residues 1–27 (MKWDKRVVALILAVMIVCPLFAAPAHA) form the signal peptide. An ATLF-like domain is found at 30–216 (QSILDKLVVL…TYEFMAKLFA (187 aa)). The plays a crucial role in substrate specificity stretch occupies residues 112–115 (SERV). His137 is a Zn(2+) binding site. The active-site Proton acceptor is Glu138. The Zn(2+) site is built by His141, Tyr174, and Glu181.

Belongs to the peptidase M34 family. Pro-Pro endopeptidase subfamily. Monomer. Zn(2+) is required as a cofactor.

Its subcellular location is the secreted. It catalyses the reaction The enzyme catalyzes the hydrolytic cleavage of peptide bonds between two proline residues.. In terms of biological role, zinc-dependent endoprotease with a unique preference for proline residues surrounding the scissile bond, which cleaves in a PLP-|-PVP motif. Cleaves the cell surface protein encoded by an adjacent gene, which contains two PPEP-2 cleaving sites and putative extracellular matrix-binding domains. Thereby, may have a role in the regulation of P.alvei adhesion. Is not able to cleave within the PVP-|-PVQ motif, and only shows a very poor cleavage of the VNP-|-PVP motif in vitro, which is the optimal substrate peptide for PPEP-1 from P.difficile. In Paenibacillus alvei (strain ATCC 6344 / DSM 29 / NBRC 3343 / NCIMB 9371 / NCTC 6352) (Bacillus alvei), this protein is Pro-Pro endopeptidase.